An 894-amino-acid chain; its full sequence is E3 ubiquitin-protein ligase SH3RF1 (894 aa).

The RING-type zinc finger occupies 12–53 (CPVCLERLDASAKVLPCQHTFCKRCLLGIVGSRNELRCPECR). 2 consecutive SH3 domains span residues 134 to 193 (PQLP…IIKP) and 196 to 259 (QPPP…FNSA). A disordered region spans residues 274-323 (VDTAECPSATAAQSSSASKHSDTKKNTRKRHSFTSLTMANKSSQASQNRH). The span at 281-291 (SATAAQSSSAS) shows a compositional bias: low complexity. Residues 293-363 (HSDTKKNTRK…APSQVHISTT (71 aa)) are interaction with RAC1. Serine 305 bears the Phosphoserine mark. The span at 306–322 (FTSLTMANKSSQASQNR) shows a compositional bias: polar residues. Residues 448-551 (HLRPQTRPSV…STAGGPAQKP (104 aa)) are interaction with AKT2. Positions 453-514 (TRPSVYVAIY…PGNYVAPVTR (62 aa)) constitute an SH3 3 domain. 2 disordered regions span residues 526–556 (MSTAGQASRGVTMVSPSTAGGPAQKPQGNGV) and 682–751 (LETE…PTLD). Serine 540 bears the Phosphoserine mark. Over residues 700 to 713 (SPESAASACGNSSA) the composition is skewed to polar residues. Residues 715 to 726 (KPDKDSKKEKKG) show a composition bias toward basic and acidic residues. At serine 743 the chain carries Phosphoserine. One can recognise an SH3 4 domain in the interval 835-894 (VVCERHRVVVSYPPQSEAELELKEGDIVFVHKKREDGWFKGTLQRNGKTGLFPGSFVENI).

It belongs to the SH3RF family. In terms of assembly, interacts with HERP1. Interacts with RAC1; in a GTP-dependent manner. Interacts with MAP3K10/MLK2 and MAP3K11/MLK3. Interacts with MAPK8IP; this interaction leads to the PJAC complex (POSH-JIP or SH3RF1/MAPK8IP apoptotic complex) with a 1:1 ratio. Interacts with SIAH1. Probably part of a signaling complex that may contain SH3RF1, MAPK8IP, DLK1, MAP2K4/MKK4, MAP2K7/MKK7, MAPK8/JNK1, MAPK9/JNK2, AKT1 and AKT2. Found in a complex with RAC2, MAP3K7/TAK1, MAP2K7/MKK7, MAPK8IP1/JIP1, MAPK8/JNK1 and MAPK9/JNK2. Found in a complex with RAC1, MAP3K11/MLK3, MAP2K7/MKK7, MAPK8IP1/JIP1 and MAPK8/JNK1. Interacts with SH3RF2. Phosphorylated at Ser-305 by AKT1 and AKT2. When phosphorylated, it has reduced ability to bind Rac. In terms of processing, autoubiquitinated. Ubiquitinated by SH3RF2, leading to proteasome-mediated degradation.

The protein localises to the cytoplasm. Its subcellular location is the perinuclear region. It is found in the cell projection. The protein resides in the lamellipodium. It localises to the golgi apparatus. The protein localises to the trans-Golgi network. It catalyses the reaction S-ubiquitinyl-[E2 ubiquitin-conjugating enzyme]-L-cysteine + [acceptor protein]-L-lysine = [E2 ubiquitin-conjugating enzyme]-L-cysteine + N(6)-ubiquitinyl-[acceptor protein]-L-lysine.. It participates in protein modification; protein ubiquitination. Has E3 ubiquitin-protein ligase activity. In the absence of an external substrate, it can catalyze self-ubiquitination. Stimulates ubiquitination of potassium channel KCNJ1, enhancing it's dynamin-dependent and clathrin-independent endocytosis. Acts as a scaffold protein that coordinates with MAPK8IP1/JIP1 in organizing different components of the JNK pathway, including RAC1 or RAC2, MAP3K11/MLK3 or MAP3K7/TAK1, MAP2K7/MKK7, MAPK8/JNK1 and/or MAPK9/JNK2 into a functional multiprotein complex to ensure the effective activation of the JNK signaling pathway. Regulates the differentiation of CD4(+) and CD8(+) T-cells and promotes T-helper 1 (Th1) cell differentiation. Regulates the activation of MAPK8/JNK1 and MAPK9/JNK2 in CD4(+) T-cells and the activation of MAPK8/JNK1 in CD8(+) T-cells. Plays a crucial role in the migration of neocortical neurons in the developing brain. Controls proper cortical neuronal migration and the formation of proximal cytoplasmic dilation in the leading process (PCDLP) in migratory neocortical neurons by regulating the proper localization of activated RAC1 and F-actin assembly. The protein is E3 ubiquitin-protein ligase SH3RF1 (Sh3rf1) of Rattus norvegicus (Rat).